The following is a 216-amino-acid chain: MACHSALAAVPSSRLHFYAPRPPLSTSVCPFQTALLGQPLRIYSSGASIAAAASPRSMVVVAATKKAVAVLKGTSQVDGVVTLVQEDDGPTTVNVRITGLTPGLHGFHLHEYGDTTNGCISTGSHFNPNKLTHGAPMDVVRHAGDLGNIVANVDGLAEATIVDDQIPLSGSNSVVGRAFVVHELEDDLGKGGHELSLTTGNAGGRLACGVVGLTPV.

The N-terminal 62 residues, 1-62 (MACHSALAAV…ASPRSMVVVA (62 aa)), are a transit peptide targeting the chloroplast. The Cu cation site is built by H108, H110, and H125. The cysteines at positions 119 and 208 are disulfide-linked. Zn(2+) is bound by residues H125, H133, H142, and D145. H182 provides a ligand contact to Cu cation.

It belongs to the Cu-Zn superoxide dismutase family. In terms of assembly, homotetramer. The cofactor is Cu cation. It depends on Zn(2+) as a cofactor.

The protein localises to the plastid. It is found in the chloroplast. The catalysed reaction is 2 superoxide + 2 H(+) = H2O2 + O2. In terms of biological role, destroys radicals which are normally produced within the cells and which are toxic to biological systems. In Zantedeschia aethiopica (White calla lily), this protein is Superoxide dismutase [Cu-Zn], chloroplastic (SODCP).